A 601-amino-acid polypeptide reads, in one-letter code: Elongation factor 4 (601 aa).

The region spanning 7–189 (DNIRNFSIVA…AIVKRLPAPK (183 aa)) is the tr-type G domain. GTP is bound by residues 19-24 (DHGKST) and 136-139 (NKVD).

Belongs to the TRAFAC class translation factor GTPase superfamily. Classic translation factor GTPase family. LepA subfamily.

The protein resides in the cell inner membrane. It catalyses the reaction GTP + H2O = GDP + phosphate + H(+). In terms of biological role, required for accurate and efficient protein synthesis under certain stress conditions. May act as a fidelity factor of the translation reaction, by catalyzing a one-codon backward translocation of tRNAs on improperly translocated ribosomes. Back-translocation proceeds from a post-translocation (POST) complex to a pre-translocation (PRE) complex, thus giving elongation factor G a second chance to translocate the tRNAs correctly. Binds to ribosomes in a GTP-dependent manner. The chain is Elongation factor 4 from Methylorubrum extorquens (strain CM4 / NCIMB 13688) (Methylobacterium extorquens).